The sequence spans 462 residues: MSKLWGGRFTKTAEQWVDEFGASIGFDQQLVEEDITGSIAHVTMLAKQHILSEEEAAQIKNGLKTLQKKAAAGELVFSAAQEDIHLNLEKLLIDEIGPVGGKLHTGRSRNDQVATDMHLYLRTQTEEIMEAIRTLQAALVKQAEGHVETLIPGYTHLQRAQPVSFAHHLLAYFWMLERDYGRLQDSLKRVNISPLGAGALAGTTFPIDRAYTAELLHFEGIYENSLDAVSDRDFIVEFLAASATLMMHLSRLCEELILWSAQEFQFIEIDDAFATGSSIMPQKKNPDMAELIRGKTGRVYGSLFSLLTTLKGLPLAYNKDMQEDKEGMFDTVKTVKGSLRIFAGMIETITVNTDAMAKAVTSDFSNATELADYLATKGMPFREAHEVVGKLVLTAIEKGVYLLDLPIEVYKEASSLFADDIYEVLQPKTVVGRRNSAGGTGFEQVKLALGKANDLLSQSIKG.

It belongs to the lyase 1 family. Argininosuccinate lyase subfamily.

The protein localises to the cytoplasm. It carries out the reaction 2-(N(omega)-L-arginino)succinate = fumarate + L-arginine. The protein operates within amino-acid biosynthesis; L-arginine biosynthesis; L-arginine from L-ornithine and carbamoyl phosphate: step 3/3. The polypeptide is Argininosuccinate lyase 2 (Shouchella clausii (strain KSM-K16) (Alkalihalobacillus clausii)).